The chain runs to 135 residues: Ribosome-binding factor A (135 aa).

The protein belongs to the RbfA family. Monomer. Binds 30S ribosomal subunits, but not 50S ribosomal subunits or 70S ribosomes.

The protein localises to the cytoplasm. One of several proteins that assist in the late maturation steps of the functional core of the 30S ribosomal subunit. Associates with free 30S ribosomal subunits (but not with 30S subunits that are part of 70S ribosomes or polysomes). Required for efficient processing of 16S rRNA. May interact with the 5'-terminal helix region of 16S rRNA. This Aliivibrio salmonicida (strain LFI1238) (Vibrio salmonicida (strain LFI1238)) protein is Ribosome-binding factor A.